A 695-amino-acid chain; its full sequence is Highly divergent homeobox (695 aa).

2 consecutive DNA-binding regions (homeobox) follow at residues 3–63 and 440–503; these read LRSV…SSKS and ALQD…RLMG. The tract at residues 56-81 is disordered; it reads RRKMSSKSALESGGAPPGTAHTAPSV. The tract at residues 653–695 is disordered; that stretch reads QQALLSDLPPELEEMDFNHTSPEPDDTSFSLSSLSEKNASDSL. Residues 679–695 show a composition bias toward polar residues; sequence TSFSLSSLSEKNASDSL.

The protein resides in the nucleus. The protein is Highly divergent homeobox (HDX) of Gallus gallus (Chicken).